A 705-amino-acid chain; its full sequence is Ovotransferrin (705 aa).

Residues 1–19 form the signal peptide; it reads MKLILCTVLSLGIAAVCFA. Transferrin-like domains follow at residues 26–352 and 364–689; these read IRWC…SMRK and IQWC…SLKT. Cystine bridges form between Cys29–Cys64 and Cys39–Cys55. The Fe(3+) site is built by Asp79 and Tyr111. Cystine bridges form between Cys134/Cys216, Cys179/Cys193, Cys190/Cys201, and Cys247/Cys261. Residues Thr136, Arg140, Ala142, and Gly143 each contribute to the hydrogencarbonate site. Position 210 (Tyr210) interacts with Fe(3+). Fe(3+) is bound at residue His269. Residues 352–360 form a connecting region region; sequence KDQLTPSPR. 2 disulfides stabilise this stretch: Cys367–Cys399 and Cys377–Cys390. Residues Asp414 and Tyr450 each coordinate Fe(3+). 7 disulfides stabilise this stretch: Cys424-Cys699, Cys440-Cys662, Cys473-Cys549, Cys497-Cys690, Cys507-Cys521, Cys518-Cys532, and Cys589-Cys603. Residues Thr475, Arg479, Ala481, and Gly482 each coordinate hydrogencarbonate. The N-linked (GlcNAc...) asparagine glycan is linked to Asn492. Tyr543 contacts Fe(3+). Fe(3+) is bound at residue His611.

This sequence belongs to the transferrin family. Monomer. Different forms of hen transferrin are distinguished by their carbohydrate composition. Ovotransferrin and embryo serum transferrin but not adult serum transferrin, have bisecting N-acetylglucosamine. Transferrin secreted by embryo hepatocytes in primary culture is marked by the presence of (alpha1-6) fucosylation of the core N-acetylglucosamine. Serum transferrins also differ in the number of attached neuraminic acid residues. In both embryo forms, sialylation occurs on the Man (alpha 1-3)-linked antennae. In terms of tissue distribution, expressed in the magnum of the oviduct (at protein level).

The protein localises to the secreted. In terms of biological role, transferrins are iron binding transport proteins which can bind two Fe(3+) ions in association with the binding of an anion, usually bicarbonate. Responsible for the transport of iron from sites of absorption and heme degradation to those of storage and utilization. There are two forms of hen transferrin, ovotransferrin, found in the ovoducts and, serum transferrin, secreted by the liver. Serum transferrin may also have a role in stimulating cell proliferation and is regulated by iron levels. Ovotransferrin has a bacteriostatic function and, is not controlled by iron levels. This chain is Ovotransferrin, found in Gallus gallus (Chicken).